The sequence spans 940 residues: Isoleucine--tRNA ligase (940 aa).

The short motif at 58-68 (PYANGSIHIGH) is the 'HIGH' region element. Glu-564 lines the L-isoleucyl-5'-AMP pocket. The 'KMSKS' region motif lies at 605 to 609 (KMSKS). Lys-608 contacts ATP. Positions 903, 906, 923, and 926 each coordinate Zn(2+).

The protein belongs to the class-I aminoacyl-tRNA synthetase family. IleS type 1 subfamily. Monomer. The cofactor is Zn(2+).

Its subcellular location is the cytoplasm. The enzyme catalyses tRNA(Ile) + L-isoleucine + ATP = L-isoleucyl-tRNA(Ile) + AMP + diphosphate. Catalyzes the attachment of isoleucine to tRNA(Ile). As IleRS can inadvertently accommodate and process structurally similar amino acids such as valine, to avoid such errors it has two additional distinct tRNA(Ile)-dependent editing activities. One activity is designated as 'pretransfer' editing and involves the hydrolysis of activated Val-AMP. The other activity is designated 'posttransfer' editing and involves deacylation of mischarged Val-tRNA(Ile). The protein is Isoleucine--tRNA ligase of Shewanella baltica (strain OS185).